The following is a 495-amino-acid chain: ATP synthase subunit beta, chloroplastic (495 aa).

Gly172–Thr179 contacts ATP.

The protein belongs to the ATPase alpha/beta chains family. F-type ATPases have 2 components, CF(1) - the catalytic core - and CF(0) - the membrane proton channel. CF(1) has five subunits: alpha(3), beta(3), gamma(1), delta(1), epsilon(1). CF(0) has four main subunits: a(1), b(1), b'(1) and c(9-12).

The protein resides in the plastid. It localises to the chloroplast thylakoid membrane. The catalysed reaction is ATP + H2O + 4 H(+)(in) = ADP + phosphate + 5 H(+)(out). Its function is as follows. Produces ATP from ADP in the presence of a proton gradient across the membrane. The catalytic sites are hosted primarily by the beta subunits. The chain is ATP synthase subunit beta, chloroplastic from Pteridium aquilinum (Bracken fern).